Reading from the N-terminus, the 215-residue chain is 3,4-dihydroxy-2-butanone 4-phosphate synthase (215 aa).

D-ribulose 5-phosphate-binding positions include 38 to 39 (RE), Asp43, 151 to 155 (RRGHT), and Glu175. Glu39 lines the Mg(2+) pocket. His154 is a Mg(2+) binding site.

This sequence belongs to the DHBP synthase family. As to quaternary structure, homodimer. It depends on Mg(2+) as a cofactor. Mn(2+) serves as cofactor.

It catalyses the reaction D-ribulose 5-phosphate = (2S)-2-hydroxy-3-oxobutyl phosphate + formate + H(+). It functions in the pathway cofactor biosynthesis; riboflavin biosynthesis; 2-hydroxy-3-oxobutyl phosphate from D-ribulose 5-phosphate: step 1/1. Its function is as follows. Catalyzes the conversion of D-ribulose 5-phosphate to formate and 3,4-dihydroxy-2-butanone 4-phosphate. The sequence is that of 3,4-dihydroxy-2-butanone 4-phosphate synthase from Haemophilus influenzae (strain PittGG).